The sequence spans 277 residues: Probable diphthine methyl ester synthase (277 aa).

S-adenosyl-L-methionine contacts are provided by residues Leu-9, Asp-89, Gly-92, 117 to 118, Leu-168, Leu-227, and His-252; that span reads SV.

Belongs to the diphthine synthase family.

The enzyme catalyses 2-[(3S)-amino-3-carboxypropyl]-L-histidyl-[translation elongation factor 2] + 4 S-adenosyl-L-methionine = diphthine methyl ester-[translation elongation factor 2] + 4 S-adenosyl-L-homocysteine + 3 H(+). Its pathway is protein modification; peptidyl-diphthamide biosynthesis. Functionally, S-adenosyl-L-methionine-dependent methyltransferase that catalyzes four methylations of the modified target histidine residue in translation elongation factor 2 (EF-2), to form an intermediate called diphthine methyl ester. The four successive methylation reactions represent the second step of diphthamide biosynthesis. The sequence is that of Probable diphthine methyl ester synthase from Arabidopsis thaliana (Mouse-ear cress).